A 426-amino-acid chain; its full sequence is Putative zinc protease AlbF (426 aa).

Zn(2+) is bound at residue His66. The active-site Proton acceptor is Glu69. Zn(2+) is bound by residues His70 and Glu142.

This sequence belongs to the peptidase M16 family. Zn(2+) serves as cofactor.

Functionally, required for production of the bacteriocin subtilosin. Could catalyze some step in the processing of presubtilosin. This is Putative zinc protease AlbF (albF) from Bacillus subtilis (strain 168).